Reading from the N-terminus, the 92-residue chain is RNA-binding protein Hfq (92 aa).

The Sm domain maps to 11 to 71 (DRFLNHLRVN…ISTIIPSSYV (61 aa)).

This sequence belongs to the Hfq family. Homohexamer.

Functionally, RNA chaperone that binds small regulatory RNA (sRNAs) and mRNAs to facilitate mRNA translational regulation in response to envelope stress, environmental stress and changes in metabolite concentrations. Also binds with high specificity to tRNAs. The protein is RNA-binding protein Hfq of Thermotoga maritima (strain ATCC 43589 / DSM 3109 / JCM 10099 / NBRC 100826 / MSB8).